Reading from the N-terminus, the 377-residue chain is Chaperone protein DnaJ (377 aa).

Positions 5-70 (DYYQILGIPK…EKRSAYDQYG (66 aa)) constitute a J domain. The CR-type zinc finger occupies 132–210 (GIKKEIQIPT…CHGQGRVETY (79 aa)). 8 residues coordinate Zn(2+): cysteine 145, cysteine 148, cysteine 162, cysteine 165, cysteine 184, cysteine 187, cysteine 198, and cysteine 201. CXXCXGXG motif repeat units follow at residues 145 to 152 (CKTCYGSG), 162 to 169 (CSTCHGKG), 184 to 191 (CPTCHGKG), and 198 to 205 (CNLCHGQG).

Belongs to the DnaJ family. In terms of assembly, homodimer. Zn(2+) is required as a cofactor.

It is found in the cytoplasm. Participates actively in the response to hyperosmotic and heat shock by preventing the aggregation of stress-denatured proteins and by disaggregating proteins, also in an autonomous, DnaK-independent fashion. Unfolded proteins bind initially to DnaJ; upon interaction with the DnaJ-bound protein, DnaK hydrolyzes its bound ATP, resulting in the formation of a stable complex. GrpE releases ADP from DnaK; ATP binding to DnaK triggers the release of the substrate protein, thus completing the reaction cycle. Several rounds of ATP-dependent interactions between DnaJ, DnaK and GrpE are required for fully efficient folding. Also involved, together with DnaK and GrpE, in the DNA replication of plasmids through activation of initiation proteins. In Buchnera aphidicola subsp. Acyrthosiphon pisum (strain 5A), this protein is Chaperone protein DnaJ.